The sequence spans 45 residues: AAGQLSLTQLESLREVCELNLACEHMMDTEGIIAAYTAYYGPIPY.

A Gla domain is found at 1–41 (AAGQLSLTQLESLREVCELNLACEHMMDTEGIIAAYTAYYG). Positions 11, 15, 18, and 24 each coordinate Ca(2+). 4-carboxyglutamate occurs at positions 11, 15, and 18. A disulfide bridge links cysteine 17 with cysteine 23.

It belongs to the osteocalcin/matrix Gla protein family. Post-translationally, gamma-carboxyglutamate residues are formed by vitamin K dependent carboxylation by GGCX. These residues are essential for the binding of calcium.

The protein resides in the secreted. In terms of biological role, the carboxylated form is one of the main organic components of the bone matrix, which constitutes 1-2% of the total bone protein. The carboxylated form binds strongly to apatite and calcium. This is Osteocalcin 1 from Diplodus sargus (White seabream).